Here is an 812-residue protein sequence, read N- to C-terminus: Ras guanine nucleotide exchange factor J (812 aa).

2 stretches are compositionally biased toward low complexity: residues 1–36 (MSNP…NSKS) and 53–65 (LLNR…NLNN). Residues 1 to 146 (MSNPVSINNS…GGSSGGLNMS (146 aa)) form a disordered region. Positions 75 to 86 (SFTSNYQNIYTP) are enriched in polar residues. Residues 87-101 (NNNSYNSSNNNNNNN) are compositionally biased toward low complexity. Residues 131–141 (NSGGGGGGSSG) are compositionally biased toward gly residues. In terms of domain architecture, LisH spans 214–246 (GRDTMLQLILQHLQFEGLMDSRKLLEEEARVQY). The disordered stretch occupies residues 320-382 (IIYVDDKEKE…NNSIGNSNSY (63 aa)). A compositionally biased stretch (basic and acidic residues) spans 323–343 (VDDKEKEKEKEKEKEKEKDKF). Over residues 344–382 (GPNSTNSLSGSGSSPNIPSGMNNNSSSIGNNSIGNSNSY) the composition is skewed to low complexity. In terms of domain architecture, N-terminal Ras-GEF spans 409–535 (NKPQVKAASL…LSESLNAKIK (127 aa)). The region spanning 573–804 (DEEEIARQLT…YSRSMSFEPR (232 aa)) is the Ras-GEF domain.

Functionally, promotes the exchange of Ras-bound GDP by GTP. In Dictyostelium discoideum (Social amoeba), this protein is Ras guanine nucleotide exchange factor J (gefJ).